The primary structure comprises 312 residues: Carbonic anhydrase 4 (312 aa).

Positions 1–18 are cleaved as a signal peptide; that stretch reads MRMLLALLALSAARPSAS. The Alpha-carbonic anhydrase domain maps to 21-285; it reads SHWCYEVQAE…LGQRTVIKSG (265 aa). 2 disulfides stabilise this stretch: C24-C36 and C46-C229. Catalysis depends on H88, which acts as the Proton donor/acceptor. The Zn(2+) site is built by H115, H117, and H140. Residue 225-226 coordinates substrate; sequence TT. Residue S284 is the site of GPI-anchor amidated serine attachment. Residues 285–312 constitute a propeptide, removed in mature form; that stretch reads GAPGRPLPWALPALLGPMLACLLAGFLR.

It belongs to the alpha-carbonic anhydrase family. Interacts with SLC4A4. Zn(2+) is required as a cofactor. As to expression, expressed in the endothelium of the choriocapillaris in eyes (at protein level). Not expressed in the retinal epithelium at detectable levels.

It localises to the cell membrane. The enzyme catalyses hydrogencarbonate + H(+) = CO2 + H2O. Activated by histamine, L-adrenaline, D-phenylalanine, L- and D-histidine. Inhibited by coumarins, saccharin, sulfonamide derivatives such as acetazolamide and Foscarnet (phosphonoformate trisodium salt). Catalyzes the reversible hydration of carbon dioxide into bicarbonate and protons and thus is essential to maintaining intracellular and extracellular pH. May stimulate the sodium/bicarbonate transporter activity of SLC4A4 that acts in pH homeostasis. It is essential for acid overload removal from the retina and retina epithelium, and acid release in the choriocapillaris in the choroid. The sequence is that of Carbonic anhydrase 4 from Homo sapiens (Human).